A 306-amino-acid chain; its full sequence is 2-phosphoglycerate kinase (306 aa).

The region spanning 1–90 is the ATP-cone domain; it reads MIMVQGEVSG…LWRKIRQCKE (90 aa).

Belongs to the 2-phosphoglycerate kinase family. It depends on a divalent metal cation as a cofactor.

It catalyses the reaction (2R)-2-phosphoglycerate + ATP = (2R)-2,3-bisphosphoglycerate + ADP + H(+). It functions in the pathway thermoadapter biosynthesis; cyclic 2,3-diphosphoglycerate biosynthesis; cyclic 2,3-diphosphoglycerate from 2-phospho-D-glycerate: step 1/2. Catalyzes the phosphorylation of 2-phosphoglycerate to 2,3-diphosphoglycerate. Involved in the biosynthesis of cyclic 2,3-bisphosphoglycerate, a thermoprotectant. The sequence is that of 2-phosphoglycerate kinase from Methanothermobacter thermautotrophicus (strain ATCC 29096 / DSM 1053 / JCM 10044 / NBRC 100330 / Delta H) (Methanobacterium thermoautotrophicum).